The following is a 298-amino-acid chain: Cytidine deaminase (298 aa).

2 consecutive CMP/dCMP-type deaminase domains span residues 47–167 (TEQQ…FGPS) and 186–298 (DSDD…PLLG). Residue 88–90 (NLE) coordinates substrate. Residue H101 participates in Zn(2+) binding. E103 serves as the catalytic Proton donor. Zn(2+)-binding residues include C128 and C131.

The protein belongs to the cytidine and deoxycytidylate deaminase family. Homodimer. Zn(2+) serves as cofactor.

The catalysed reaction is cytidine + H2O + H(+) = uridine + NH4(+). It catalyses the reaction 2'-deoxycytidine + H2O + H(+) = 2'-deoxyuridine + NH4(+). In terms of biological role, this enzyme scavenges exogenous and endogenous cytidine and 2'-deoxycytidine for UMP synthesis. This chain is Cytidine deaminase, found in Shewanella frigidimarina (strain NCIMB 400).